We begin with the raw amino-acid sequence, 377 residues long: Caspase-4 (377 aa).

The required for LPS-binding stretch occupies residues 1–59; sequence MAEGNHRKKPLKVLESLGKDFLTGVLDNLVEQNVLNWKEEEKKKYYDAKTEDKVRVMAD. The propeptide occupies 1 to 80; it reads MAEGNHRKKP…MLLQTFFNID (80 aa). The region spanning 1-91 is the CARD domain; it reads MAEGNHRKKP…ISPNKKAHPN (91 aa). An N-acetylalanine modification is found at alanine 2. At serine 83 the chain carries Phosphoserine. The segment at 84 to 104 is disordered; it reads PNKKAHPNMEAGPPESGESTD. Active-site residues include histidine 210 and cysteine 258. Positions 271 to 289 are excised as a propeptide; the sequence is SPASLEVASSQSSENLEED. Arginine 314 is subject to (Microbial infection) ADP-riboxanated arginine.

It belongs to the peptidase C14A family. In terms of assembly, heterotetramer that consists of two anti-parallel arranged heterodimers, each one formed by a 20 kDa (Caspase-4 subunit p20) and a 10 kDa (Caspase-4 subunit p10) subunit. Upon direct LPS-binding, forms large homooligomers, resulting in its activation. These oligomers are often referred to as 'non-canonical inflammasomes'. In its precursor form, interacts with TMEM214; this interaction is required for association with the endoplasmic reticulum membrane. Interacts with CASP1. Interacts with NOD2. Interacts with SERPINB1; this interaction regulates CASP4 activity. As to quaternary structure, heterotetramer that consists of two anti-parallel arranged heterodimers, each one formed by a 20 kDa (Caspase-4 subunit p20) and a 10 kDa (Caspase-4 subunit p10) subunit. (Microbial infection) Interacts with NleF protein from pathogenic E.coli; this interaction leads to enzyme inhibition. In terms of assembly, (Microbial infection) Interacts with cathepsin CTSG; the interaction is promoted by the Td92 surface protein of the periodontal pathogen T.denticola and leads to CASP4 activation. In response to activation signals, undergoes autoproteolytic cleavage and activation. In terms of processing, (Microbial infection) ADP-riboxanation by S.flexneri OspC3 blocks CASP4 autoprocessing, preventing CASP4 activation and ability to recognize and cleave GSDMD, thereby thwarting the inflammasome/pyroptosis-mediated defense. Widely expressed, including in keratinocytes and colonic and small intestinal epithelial cells (at protein level). Not detected in brain.

It localises to the cytoplasm. It is found in the cytosol. The protein resides in the endoplasmic reticulum membrane. The protein localises to the mitochondrion. Its subcellular location is the inflammasome. It localises to the secreted. The enzyme catalyses Strict requirement for Asp at the P1 position. It has a preferred cleavage sequence of Tyr-Val-Ala-Asp-|- but also cleaves at Asp-Glu-Val-Asp-|-.. With respect to regulation, activated by homooligomerization induced by direct binding to cytosolic LPS, in a TLR4-independent manner. In addition to LPS, CASP4/CASP11 may also be activated by oxidized phospholipid 1-palmitoyl-2-arachidonoyl- sn-glycero-3-phosphorylcholine, an oxidized phospholipid (oxPAPC), in dendritic cells, promoting adaptive immunity. The role of oxPAPC is however unclear and another report suggests that oxPAPC competes with LPS-binding and inhibits the non-canonical inflammasome in macrophages. Inflammatory caspase that acts as the effector of the non-canonical inflammasome by mediating lipopolysaccharide (LPS)-induced pyroptosis. Also indirectly activates the NLRP3 and NLRP6 inflammasomes. Acts as a thiol protease that cleaves a tetrapeptide after an Asp residue at position P1: catalyzes cleavage of CGAS, GSDMD and IL18. Effector of the non-canonical inflammasome independently of NLRP3 inflammasome and CASP1: the non-canonical inflammasome promotes pyroptosis through GSDMD cleavage without involving secretion of cytokine IL1B. In the non-canonical inflammasome, CASP4 is activated by direct binding to the lipid A moiety of LPS without the need of an upstream sensor. LPS-binding promotes CASP4 activation and CASP4-mediated cleavage of GSDMD and IL18, followed by IL18 secretion through the GSDMD pore, pyroptosis of infected cells and their extrusion into the gut lumen. Also indirectly promotes secretion of mature cytokines (IL1A and HMGB1) downstream of GSDMD-mediated pyroptosis via activation of the NLRP3 and NLRP6 inflammasomes. Involved in NLRP3-dependent CASP1 activation and IL1B secretion in response to non-canonical activators, such as UVB radiation or cholera enterotoxin. Involved in NLRP6 inflammasome-dependent activation in response to lipoteichoic acid (LTA), a cell-wall component of Gram-positive bacteria, which leads to CASP1 activation and IL1B secretion. Involved in LPS-induced IL6 secretion; this activity may not require caspase enzymatic activity. The non-canonical inflammasome is required for innate immunity to cytosolic, but not vacuolar, bacteria. Plays a crucial role in the restriction of S.typhimurium replication in colonic epithelial cells during infection. Activation of the non-canonical inflammasome in brain endothelial cells can lead to excessive pyroptosis, leading to blood-brain barrier breakdown. Pyroptosis limits bacterial replication, while cytokine secretion promotes the recruitment and activation of immune cells and triggers mucosal inflammation. May also act as an activator of adaptive immunity in dendritic cells, following activation by oxidized phospholipid 1-palmitoyl-2-arachidonoyl- sn-glycero-3-phosphorylcholine, an oxidized phospholipid (oxPAPC). Involved in cell death induced by endoplasmic reticulum stress and by treatment with cytotoxic APP peptides found in Alzheimer's patient brains. Cleavage of GSDMD is not strictly dependent on the consensus cleavage site but depends on an exosite interface on CASP4 that recognizes and binds the Gasdermin-D, C-terminal (GSDMD-CT) part. Catalyzes cleavage and maturation of IL18; IL18 processing also depends of the exosite interface on CASP4. In contrast, it does not directly process IL1B. During non-canonical inflammasome activation, cuts CGAS and may play a role in the regulation of antiviral innate immune activation. Its function is as follows. (Microbial infection) In response to the Td92 surface protein of the periodontal pathogen T.denticola, activated by cathepsin CTSG which leads to production and secretion of IL1A and pyroptosis of gingival fibroblasts. The sequence is that of Caspase-4 from Homo sapiens (Human).